The chain runs to 672 residues: MKTLKVLKIFIIVYISSVSLESFAGFGESCSNLPITSDGYLETYTAYGYIIRSIDMKDPRGNCNPSTSSITFCFKNVEGSASPCTIYTLNEGDTRKISDLSTDNNPDLGANTVLKNIVLTVKKFGNDLCLAMPTSRGPMPVACKSLSVTPTATKPKDENCNIGKSCYTGANYSQSLINFSGLAVQCLSETLNKIFFTGSSCSAQDQNSRITHLASFATFQGYLKRIIGAALILYTMFFAFNMALNKEYATTEKITLFIIKFLFVVYFSIGLGPLDFSGGQPVKENGMLKYGLPLLTGAAPDFAGMIFNAAGSRGLCQFDNTKYKDGYKFYGLWDAIDCRIGYYLGLDLLYNIDKNGILGRPVSNGTSGNNKPIPNFDPDGKKDRPHDLSKAGALRFFTVMFGFFMSGHVIILVAGMVFSVIFLSILLYFITHYLVCMVTIYVMTYISPIFIPMVLFTRTKAYFDGWLKVCISCALQPAVVAGFIALLITMYDSAIFKNCEFLRYDYEKGDIRFSTFELRLPSIDADKCQESFGYKMLKYYAGEGWEEHLLILFPIKSIVRDVVSILAELLCVLIFSVIFYYFSKSIGRFAADLTNGPNMDAVTASPTKIVDLVKKGAAFLKDASVHEHGKSSLGDKPDIGNKRKDGAQQGEDAVNSSGGEVADLASGSGGGK.

The N-terminal stretch at M1–A24 is a signal peptide. 2 helical membrane-spanning segments follow: residues I226–K246 and I254–L274. Over residues S363–P372 the composition is skewed to polar residues. The disordered stretch occupies residues S363–R384. 4 helical membrane-spanning segments follow: residues I410 to I430, C436 to F456, V469 to T489, and V562 to F582. The span at H628–G646 shows a compositional bias: basic and acidic residues. The segment at H628–K672 is disordered.

Belongs to the TrbL/VirB6 family.

It is found in the cell membrane. This is an uncharacterized protein from Rickettsia prowazekii (strain Madrid E).